A 188-amino-acid chain; its full sequence is Elongation factor P (188 aa).

It belongs to the elongation factor P family.

Its subcellular location is the cytoplasm. Its pathway is protein biosynthesis; polypeptide chain elongation. Its function is as follows. Involved in peptide bond synthesis. Stimulates efficient translation and peptide-bond synthesis on native or reconstituted 70S ribosomes in vitro. Probably functions indirectly by altering the affinity of the ribosome for aminoacyl-tRNA, thus increasing their reactivity as acceptors for peptidyl transferase. In Rickettsia prowazekii (strain Madrid E), this protein is Elongation factor P (efp).